Consider the following 347-residue polypeptide: MKEMNICGINKNWVLPEAQENNVKKFLPRPLSRVNGWSPPLHSFQAISWITYLAMSIVTFGIFIPFLPYSWKYAANIVMGGVFIFHLIVHLIAITIDPADTNVRLKKDYTQPVPAFDRSKHTHVIQNQYCHLCEVTASKKAKHCSACNKCVSGFDHHCKWLNNCVGRRNYWFFFWSVASAAVGILGVMIILCYICIQYFVNPDELRTDPLYKEIISENTWLLFLSLWPVPVKTPIVLSIAVMALLLAIASFVMLGHLLIFHLYLITKNMSTFDYLMKTRFKKNLHPAEEKELPLQKKGDLPQEKSDNWAWPKSPPRVGSQKFPVSTLSPKSSVCFVASPPKICHSED.

Over 1-46 (MKEMNICGINKNWVLPEAQENNVKKFLPRPLSRVNGWSPPLHSFQA) the chain is Cytoplasmic. The helical transmembrane segment at 47-67 (ISWITYLAMSIVTFGIFIPFL) threads the bilayer. Topologically, residues 68 to 75 (PYSWKYAA) are lumenal. The helical transmembrane segment at 76 to 96 (NIVMGGVFIFHLIVHLIAITI) threads the bilayer. At 97–170 (DPADTNVRLK…LNNCVGRRNY (74 aa)) the chain is on the cytoplasmic side. The DHHC domain maps to 128–178 (QYCHLCEVTASKKAKHCSACNKCVSGFDHHCKWLNNCVGRRNYWFFFWSVA). Cysteine 158 functions as the S-palmitoyl cysteine intermediate in the catalytic mechanism. The chain crosses the membrane as a helical span at residues 171 to 191 (WFFFWSVASAAVGILGVMIIL). The Lumenal segment spans residues 192–234 (CYICIQYFVNPDELRTDPLYKEIISENTWLLFLSLWPVPVKTP). The helical transmembrane segment at 235 to 255 (IVLSIAVMALLLAIASFVMLG) threads the bilayer. Over 256–347 (HLLIFHLYLI…SPPKICHSED (92 aa)) the chain is Cytoplasmic. The span at 291–306 (ELPLQKKGDLPQEKSD) shows a compositional bias: basic and acidic residues. A disordered region spans residues 291 to 332 (ELPLQKKGDLPQEKSDNWAWPKSPPRVGSQKFPVSTLSPKSS). A compositionally biased stretch (polar residues) spans 322–331 (FPVSTLSPKS).

It belongs to the DHHC palmitoyltransferase family. In terms of assembly, interacts with IRF3 and STING1; in presence of DNA viruses recruits IRF3 to STING1 promoting IRF3 phosphorylation and activation.

The protein localises to the endosome membrane. The enzyme catalyses L-cysteinyl-[protein] + hexadecanoyl-CoA = S-hexadecanoyl-L-cysteinyl-[protein] + CoA. Endoplasmic reticulum-localized palmitoyltransferase that could catalyze the addition of palmitate onto various protein substrates and be involved in a variety of cellular processes. Has a palmitoyltransferase activity toward NCDN and regulates NCDN association with endosome membranes through this palmitoylation. May play a role in cell proliferation. In terms of biological role, also has a palmitoyltransferase activity-independent function in DNA virus-triggered and CGAS-mediated innate immune response. Functions as an adapter that recruits IRF3 to STING1 to promote the activation of that key transcriptional regulator of type I interferon (IFN)-dependent immune response. The chain is Palmitoyltransferase ZDHHC11 from Mus musculus (Mouse).